We begin with the raw amino-acid sequence, 95 residues long: uncharacterized protein (95 aa).

Residues 65 to 95 (DANDYDTTTTEEEDSSTTTTTDNETNSDDDI) form a disordered region.

This is an uncharacterized protein from Lymantria dispar multicapsid nuclear polyhedrosis virus (LdMNPV).